Here is a 140-residue protein sequence, read N- to C-terminus: Transmembrane protein 234 homolog (140 aa).

Transmembrane regions (helical) follow at residues 14–34, 64–84, 88–108, and 116–136; these read IYAV…NPFI, WQYL…VLTL, ELSL…AITA, and SGWK…ICGL.

It belongs to the TMEM234 family.

It localises to the membrane. The sequence is that of Transmembrane protein 234 homolog from Anopheles gambiae (African malaria mosquito).